Consider the following 437-residue polypeptide: Elongation factor 1-gamma (437 aa).

N-acetylalanine is present on Ala-2. One can recognise a GST N-terminal domain in the interval 2-87 (AAGTLYTYPE…YVSNEELRGS (86 aa)). Residues 88 to 216 (TPEAAAQVVQ…VKLCEKMAQF (129 aa)) form the GST C-terminal domain. N6-acetyllysine occurs at positions 147 and 212. Positions 221 to 254 (FAESQPKKDTPRKEKGSREEKQKPQTERKEEKKA) are enriched in basic and acidic residues. A disordered region spans residues 221–268 (FAESQPKKDTPRKEKGSREEKQKPQTERKEEKKAAAPAPEEEMDECEQ). Residue Lys-253 forms a Glycyl lysine isopeptide (Lys-Gly) (interchain with G-Cter in SUMO1) linkage. Positions 276–437 (AKDPFAHLPK…KAVNQGKIFK (162 aa)) constitute an EF-1-gamma C-terminal domain. Residue Lys-285 forms a Glycyl lysine isopeptide (Lys-Gly) (interchain with G-Cter in SUMO2) linkage. N6-acetyllysine is present on Lys-401. Lys-434 is subject to N6-acetyllysine; alternate. N6-malonyllysine; alternate is present on Lys-434.

In terms of assembly, EF-1 is composed of four subunits: alpha, beta, delta, and gamma.

Functionally, probably plays a role in anchoring the complex to other cellular components. This is Elongation factor 1-gamma (Eef1g) from Rattus norvegicus (Rat).